The chain runs to 278 residues: Shikimate dehydrogenase (NADP(+)) (278 aa).

Shikimate contacts are provided by residues 18–20 (SRS) and T65. The active-site Proton acceptor is the K69. E80 lines the NADP(+) pocket. N89 and D104 together coordinate shikimate. NADP(+) is bound by residues 129 to 133 (GAGGS) and L218. Residue Y220 participates in shikimate binding. G241 contacts NADP(+).

Belongs to the shikimate dehydrogenase family. As to quaternary structure, homodimer.

The enzyme catalyses shikimate + NADP(+) = 3-dehydroshikimate + NADPH + H(+). It functions in the pathway metabolic intermediate biosynthesis; chorismate biosynthesis; chorismate from D-erythrose 4-phosphate and phosphoenolpyruvate: step 4/7. Involved in the biosynthesis of the chorismate, which leads to the biosynthesis of aromatic amino acids. Catalyzes the reversible NADPH linked reduction of 3-dehydroshikimate (DHSA) to yield shikimate (SA). This Rhodopseudomonas palustris (strain ATCC BAA-98 / CGA009) protein is Shikimate dehydrogenase (NADP(+)).